A 691-amino-acid polypeptide reads, in one-letter code: Pentatricopeptide repeat-containing protein At4g37170 (691 aa).

PPR repeat units lie at residues 84 to 118 (PAST…GFVP), 119 to 149 (GIVI…MPNR), 150 to 184 (DLCS…DSYS), 185 to 211 (WTAM…MQRV), 217 to 251 (NIFT…GLDS), 252 to 286 (DEVL…DVVS), 287 to 317 (WTSM…CERP), 318 to 352 (NEYT…GFDP), 353 to 383 (YSFA…CPKP), 384 to 418 (DLVS…GTKP), 419 to 449 (DHVT…ITEK), and 455 to 485 (TSDH…MPMK). The type E motif stretch occupies residues 490-565 (LWASVLGGCS…RPGSSWTEIK (76 aa)). Residues 566 to 596 (RKRHVFIAADTSHPMYNQIVEFLRELRKKMK) are type E(+) motif. Positions 597 to 691 (EEGYVPATSL…NGQCSCGDYW (95 aa)) are type DYW motif.

This sequence belongs to the PPR family. PCMP-H subfamily.

The sequence is that of Pentatricopeptide repeat-containing protein At4g37170 (PCMP-H5) from Arabidopsis thaliana (Mouse-ear cress).